We begin with the raw amino-acid sequence, 267 residues long: Proteasome subunit alpha (267 aa).

Residues 231-267 are disordered; sequence ETLLQERDSKESAESEEPKESEEGKKTGKKSDADSSD. Basic and acidic residues predominate over residues 234-267; it reads LQERDSKESAESEEPKESEEGKKTGKKSDADSSD.

This sequence belongs to the peptidase T1A family. The 20S proteasome core is composed of 14 alpha and 14 beta subunits that assemble into four stacked heptameric rings, resulting in a barrel-shaped structure. The two inner rings, each composed of seven catalytic beta subunits, are sandwiched by two outer rings, each composed of seven alpha subunits. The catalytic chamber with the active sites is on the inside of the barrel. Has a gated structure, the ends of the cylinder being occluded by the N-termini of the alpha-subunits. Is capped by the proteasome-associated ATPase, ARC.

It localises to the cytoplasm. It functions in the pathway protein degradation; proteasomal Pup-dependent pathway. With respect to regulation, the formation of the proteasomal ATPase ARC-20S proteasome complex, likely via the docking of the C-termini of ARC into the intersubunit pockets in the alpha-rings, may trigger opening of the gate for substrate entry. Interconversion between the open-gate and close-gate conformations leads to a dynamic regulation of the 20S proteasome proteolysis activity. Component of the proteasome core, a large protease complex with broad specificity involved in protein degradation. The protein is Proteasome subunit alpha of Mycobacterium marinum (strain ATCC BAA-535 / M).